The following is a 263-amino-acid chain: 4-hydroxy-tetrahydrodipicolinate reductase (263 aa).

10-15 (GASGKM) serves as a coordination point for NAD(+). Position 38 (arginine 38) interacts with NADP(+). NAD(+)-binding positions include 97–99 (GTT) and 123–126 (APNF). Histidine 153 (proton donor/acceptor) is an active-site residue. Position 154 (histidine 154) interacts with (S)-2,3,4,5-tetrahydrodipicolinate. Lysine 157 functions as the Proton donor in the catalytic mechanism. 163 to 164 (GT) is a binding site for (S)-2,3,4,5-tetrahydrodipicolinate.

This sequence belongs to the DapB family.

Its subcellular location is the cytoplasm. The catalysed reaction is (S)-2,3,4,5-tetrahydrodipicolinate + NAD(+) + H2O = (2S,4S)-4-hydroxy-2,3,4,5-tetrahydrodipicolinate + NADH + H(+). The enzyme catalyses (S)-2,3,4,5-tetrahydrodipicolinate + NADP(+) + H2O = (2S,4S)-4-hydroxy-2,3,4,5-tetrahydrodipicolinate + NADPH + H(+). The protein operates within amino-acid biosynthesis; L-lysine biosynthesis via DAP pathway; (S)-tetrahydrodipicolinate from L-aspartate: step 4/4. Its function is as follows. Catalyzes the conversion of 4-hydroxy-tetrahydrodipicolinate (HTPA) to tetrahydrodipicolinate. In Dehalococcoides mccartyi (strain ATCC BAA-2100 / JCM 16839 / KCTC 5957 / BAV1), this protein is 4-hydroxy-tetrahydrodipicolinate reductase.